The sequence spans 317 residues: Zinc transporter ZIP3 (317 aa).

Residues 1–3 (MTK) are Extracellular-facing. A helical membrane pass occupies residues 4-24 (LLVAKVLCMVGVFFFMLLGSL). Over 25–42 (LPVKVIEADLEKAHRSKK) the chain is Cytoplasmic. Residues 43–63 (VLSLCNTFGGGVFLATCFNAL) form a helical membrane-spanning segment. At 64–85 (LPAVRDKLQQVLSLGHISTDYP) the chain is on the extracellular side. Residues 86 to 106 (LAETLMMVGFFLTVFVEQLVL) traverse the membrane as a helical segment. Topologically, residues 107–172 (TFRRERPPFI…RELGRPGPLR (66 aa)) are cytoplasmic. A phosphoserine mark is found at serine 125 and serine 129. The helical transmembrane segment at 173-193 (LLSLVFALSAHSVFEGLALGL) threads the bilayer. Residues 194–199 (QEEGER) lie on the Extracellular side of the membrane. A helical membrane pass occupies residues 200–220 (VVSLFVGVAIHETLVAVALGI). Topologically, residues 221–232 (SMARSAVPLRDA) are cytoplasmic. The helical transmembrane segment at 233–253 (AKLAVTVSAMIPVGIGLGLGI) threads the bilayer. Topologically, residues 254–265 (ESARSVASSVAS) are extracellular. The chain crosses the membrane as a helical span at residues 266–286 (ALLQGLAGGTFLFVTFLEILA). At 287-294 (KELEERSE) the chain is on the cytoplasmic side. The chain crosses the membrane as a helical span at residues 295 to 315 (QLLKVLFLVLGYAVLAGMVFL). Residues 316–317 (KW) are Extracellular-facing.

Belongs to the ZIP transporter (TC 2.A.5) family. As to expression, highly expressed in the testes. Highly expressed in dentate gyrus granule cells of the hippocampus. Expressed in the mammary gland.

Its subcellular location is the cell membrane. The protein localises to the apical cell membrane. It carries out the reaction Zn(2+)(in) = Zn(2+)(out). Functionally, transporter for the divalent cation Zn(2+). Mediates the influx of Zn(2+) into cells from extracellular space. Controls Zn(2+) accumulation into dentate gyrus granule cells in the hippocampus. Mediates Zn(2+) reuptake from the secreted milk within the alveolar lumen. The sequence is that of Zinc transporter ZIP3 (Slc39a3) from Mus musculus (Mouse).